A 446-amino-acid chain; its full sequence is Methionine aminopeptidase 2 (446 aa).

A disordered region spans residues 1-85; sequence MAGVTEGEDT…KNKKKKKKKI (85 aa). A compositionally biased stretch (basic and acidic residues) spans 8 to 32; that stretch reads EDTKVIESKINELNIDKPKLEDNNE. A compositionally biased stretch (acidic residues) spans 42–58; that stretch reads SGDDDDDDKEEDDDNEI. The span at 73–85 shows a compositional bias: basic residues; sequence KKNKNKKKKKKKI. Substrate is bound at residue His-197. A divalent metal cation is bound by residues Asp-217, Asp-228, and His-299. Residue His-307 participates in substrate binding. The a divalent metal cation site is built by Glu-332 and Glu-427.

Belongs to the peptidase M24A family. Methionine aminopeptidase eukaryotic type 2 subfamily. Requires Co(2+) as cofactor. The cofactor is Zn(2+). Mn(2+) is required as a cofactor. Fe(2+) serves as cofactor.

It localises to the cytoplasm. It carries out the reaction Release of N-terminal amino acids, preferentially methionine, from peptides and arylamides.. Cotranslationally removes the N-terminal methionine from nascent proteins. The N-terminal methionine is often cleaved when the second residue in the primary sequence is small and uncharged (Met-Ala-, Cys, Gly, Pro, Ser, Thr, or Val). The polypeptide is Methionine aminopeptidase 2 (Candida albicans (strain SC5314 / ATCC MYA-2876) (Yeast)).